Consider the following 509-residue polypeptide: Histidine--tRNA ligase, cytoplasmic (509 aa).

Ala-2 is subject to N-acetylalanine. Residues 3–59 (ERAALEELVKLQGERVRGLKQQKASAELIEEEVAKLLKLKAQLGPDESKQKFVLKTP) form the WHEP-TRS domain. Residue Ser-66 is modified to Phosphoserine. L-histidine-binding positions include 130–132 (DLT), Arg-157, Gln-173, Asp-177, Arg-326, and 330–331 (YY). Phosphoserine is present on Ser-356.

This sequence belongs to the class-II aminoacyl-tRNA synthetase family. As to quaternary structure, homodimer. Brain, heart, liver and kidney.

It localises to the cytoplasm. It catalyses the reaction tRNA(His) + L-histidine + ATP = L-histidyl-tRNA(His) + AMP + diphosphate + H(+). In terms of biological role, catalyzes the ATP-dependent ligation of histidine to the 3'-end of its cognate tRNA, via the formation of an aminoacyl-adenylate intermediate (His-AMP). Plays a role in axon guidance. The polypeptide is Histidine--tRNA ligase, cytoplasmic (Homo sapiens (Human)).